A 321-amino-acid polypeptide reads, in one-letter code: Cytochrome f (321 aa).

Residues 1-38 (MINLFLLKYKTAFSTFLKPFAYLSLILSVCFYSIQAQA) form the signal peptide. Phe-39, Cys-59, Cys-62, and His-63 together coordinate heme. The helical transmembrane segment at 287–306 (VKGLIAFFFTVILAQILLVL) threads the bilayer.

Belongs to the cytochrome f family. In terms of assembly, the 4 large subunits of the cytochrome b6-f complex are cytochrome b6, subunit IV (17 kDa polypeptide, petD), cytochrome f and the Rieske protein, while the 4 small subunits are PetG, PetL, PetM and PetN. The complex functions as a dimer. The cofactor is heme.

The protein resides in the plastid. It localises to the chloroplast thylakoid membrane. Its function is as follows. Component of the cytochrome b6-f complex, which mediates electron transfer between photosystem II (PSII) and photosystem I (PSI), cyclic electron flow around PSI, and state transitions. This chain is Cytochrome f (petA), found in Guillardia theta (Cryptophyte).